Here is a 158-residue protein sequence, read N- to C-terminus: S-ribosylhomocysteine lyase (158 aa).

The Fe cation site is built by His56, His60, and Cys125.

Belongs to the LuxS family. Homodimer. The cofactor is Fe cation.

It carries out the reaction S-(5-deoxy-D-ribos-5-yl)-L-homocysteine = (S)-4,5-dihydroxypentane-2,3-dione + L-homocysteine. Involved in the synthesis of autoinducer 2 (AI-2) which is secreted by bacteria and is used to communicate both the cell density and the metabolic potential of the environment. The regulation of gene expression in response to changes in cell density is called quorum sensing. Catalyzes the transformation of S-ribosylhomocysteine (RHC) to homocysteine (HC) and 4,5-dihydroxy-2,3-pentadione (DPD). The chain is S-ribosylhomocysteine lyase from Leuconostoc citreum (strain KM20).